Here is a 304-residue protein sequence, read N- to C-terminus: Dihydroorotate dehydrogenase B (NAD(+)), catalytic subunit (304 aa).

FMN contacts are provided by residues S21 and 45–46 (KA). Residues K45 and 69–73 (NAIGL) contribute to the substrate site. FMN is bound by residues N99 and N127. Residue N127 coordinates substrate. Residue C130 is the Nucleophile of the active site. Residues K165 and I191 each coordinate FMN. 192–193 (NT) is a substrate binding site. Residues G217, 243–244 (GG), and 265–266 (GT) each bind FMN.

The protein belongs to the dihydroorotate dehydrogenase family. Type 1 subfamily. Heterotetramer of 2 PyrK and 2 PyrD type B subunits. FMN is required as a cofactor.

It localises to the cytoplasm. It catalyses the reaction (S)-dihydroorotate + NAD(+) = orotate + NADH + H(+). The protein operates within pyrimidine metabolism; UMP biosynthesis via de novo pathway; orotate from (S)-dihydroorotate (NAD(+) route): step 1/1. Its function is as follows. Catalyzes the conversion of dihydroorotate to orotate with NAD(+) as electron acceptor. The sequence is that of Dihydroorotate dehydrogenase B (NAD(+)), catalytic subunit (pyrD) from Listeria monocytogenes serotype 4b (strain F2365).